A 411-amino-acid polypeptide reads, in one-letter code: Adenylosuccinate synthetase (411 aa).

GTP contacts are provided by residues 11 to 17 (GDEGKGK) and 39 to 41 (GHT). Asp12 functions as the Proton acceptor in the catalytic mechanism. Residues Asp12 and Gly39 each coordinate Mg(2+). Residues 12 to 15 (DEGK), 37 to 40 (NAGH), Thr121, Arg135, Gln215, Thr230, and Arg294 each bind IMP. The active-site Proton donor is His40. 290-296 (TTTKRPR) lines the substrate pocket. GTP-binding positions include Arg296, 322 to 324 (KLD), and 400 to 402 (STS).

The protein belongs to the adenylosuccinate synthetase family. Homodimer. The cofactor is Mg(2+).

The protein localises to the cytoplasm. The catalysed reaction is IMP + L-aspartate + GTP = N(6)-(1,2-dicarboxyethyl)-AMP + GDP + phosphate + 2 H(+). Its pathway is purine metabolism; AMP biosynthesis via de novo pathway; AMP from IMP: step 1/2. In terms of biological role, plays an important role in the de novo pathway of purine nucleotide biosynthesis. Catalyzes the first committed step in the biosynthesis of AMP from IMP. In Helicobacter pylori (strain J99 / ATCC 700824) (Campylobacter pylori J99), this protein is Adenylosuccinate synthetase.